The primary structure comprises 422 residues: Choline monooxygenase, chloroplastic (422 aa).

The transit peptide at 1-47 (MMTTLTATVPEFLPPSLKSTRGYFNSHSEFGVSISKFSRRRFHNPTR) directs the protein to the chloroplast. One can recognise a Rieske domain in the interval 96-203 (WQAVGYSDQI…VAVWGPFVLL (108 aa)). [2Fe-2S] cluster contacts are provided by Cys-138, His-140, Cys-157, and His-160. Positions 269 and 274 each coordinate Fe cation.

This sequence belongs to the choline monooxygenase family. The cofactor is [2Fe-2S] cluster. Fe cation serves as cofactor. It depends on Mg(2+) as a cofactor.

The protein localises to the plastid. It is found in the chloroplast stroma. The catalysed reaction is choline + 2 reduced [2Fe-2S]-[ferredoxin] + O2 + 2 H(+) = betaine aldehyde hydrate + 2 oxidized [2Fe-2S]-[ferredoxin] + H2O. Its pathway is amine and polyamine biosynthesis; betaine biosynthesis via choline pathway; betaine aldehyde from choline (monooxygenase route): step 1/1. In terms of biological role, catalyzes the first step of the osmoprotectant glycine betaine synthesis. The polypeptide is Choline monooxygenase, chloroplastic (Arabidopsis thaliana (Mouse-ear cress)).